Here is a 6486-residue protein sequence, read N- to C-terminus: Tyrocidine synthase 3 (6486 aa).

Residues 466–1038 (IFELIAEQAS…VAELARFLSR (573 aa)) form a domain 1 (asparagine-activating) region. Carrier domains are found at residues 965-1040 (APQN…SRSE), 2002-2077 (APRN…AAAR), 3040-3115 (APTN…ATSG), 4075-4150 (AAQN…AESA), 5119-5194 (APRS…EETA), and 6162-6237 (APRN…THKR). An O-(pantetheine 4'-phosphoryl)serine mark is found at Ser-1000, Ser-2037, Ser-3075, Ser-4110, Ser-5154, and Ser-6197. The segment at 1521–2070 (YEEYALTYRE…FESPTIAGLA (550 aa)) is domain 2 (glutamine-activating). Positions 2536-3113 (NKTLQALFEE…IKALAQYVAT (578 aa)) are domain 3 (tyrosine-activating). A domain 4 (valine-activating) region spans residues 3590 to 4149 (EHAAVVMDGQ…HELAAHIAES (560 aa)). The segment at 4606–5203 (YPTDKTFQKL…AKGNVFSIEP (598 aa)) is domain 5 (ornithine-activating). A domain 6 (leucine-activating) region spans residues 5658 to 6245 (LHQLFEEQVD…KRFESRYGTA (588 aa)).

This sequence belongs to the ATP-dependent AMP-binding enzyme family. In terms of assembly, large multienzyme complex of TycA, TycB and TycC. Pantetheine 4'-phosphate is required as a cofactor.

It participates in antibiotic biosynthesis; tyrocidine biosynthesis. Its function is as follows. Incorporates six amino acids (for tyrocidine A, Asn, Gln, Tyr, Val, Orn, and Leu) in their L-configuration into the peptide product. The chain is Tyrocidine synthase 3 (tycC) from Brevibacillus parabrevis.